A 306-amino-acid polypeptide reads, in one-letter code: 4-diphosphocytidyl-2-C-methyl-D-erythritol kinase (306 aa).

Lysine 11 is an active-site residue. 98 to 108 (PIAGGMGGGSA) is an ATP binding site. Aspartate 140 is a catalytic residue.

It belongs to the GHMP kinase family. IspE subfamily.

It catalyses the reaction 4-CDP-2-C-methyl-D-erythritol + ATP = 4-CDP-2-C-methyl-D-erythritol 2-phosphate + ADP + H(+). It functions in the pathway isoprenoid biosynthesis; isopentenyl diphosphate biosynthesis via DXP pathway; isopentenyl diphosphate from 1-deoxy-D-xylulose 5-phosphate: step 3/6. In terms of biological role, catalyzes the phosphorylation of the position 2 hydroxy group of 4-diphosphocytidyl-2C-methyl-D-erythritol. The polypeptide is 4-diphosphocytidyl-2-C-methyl-D-erythritol kinase (Leifsonia xyli subsp. xyli (strain CTCB07)).